A 135-amino-acid polypeptide reads, in one-letter code: RxLR effector protein PITG_02860 (135 aa).

Positions 1-18 (MRLAFLLLAVSHFICGNA) are cleaved as a signal peptide. The short motif at 48–64 (RKLLRTDERLSEANEER) is the RxLR-dEER element. The interval 126–135 (LKDPQAFRGP) is NRL1-binding domain.

It belongs to the RxLR effector family. Interacts with host ubiquitin E3 ligase NRL1.

The protein resides in the secreted. Its subcellular location is the host cytoplasm. The protein localises to the host nucleus. It localises to the host nucleoplasm. In terms of biological role, effector that promotes P.infestans virulence and suppresses pattern-triggered immunity (PTI). Interacts with the host ubiquitin E3 ligase NRL1 and enhances the association between NRL1 and SWAP70 to promote proteasome-mediated degradation of SWAP70, which results in the suppression of immunity. This chain is RxLR effector protein PITG_02860, found in Phytophthora infestans (strain T30-4) (Potato late blight agent).